The primary structure comprises 517 residues: Bifunctional purine biosynthesis protein PurH (517 aa).

The MGS-like domain maps to 1 to 145; that stretch reads MSPLALVSVS…KNHKYVSVLV (145 aa).

This sequence belongs to the PurH family.

The enzyme catalyses (6R)-10-formyltetrahydrofolate + 5-amino-1-(5-phospho-beta-D-ribosyl)imidazole-4-carboxamide = 5-formamido-1-(5-phospho-D-ribosyl)imidazole-4-carboxamide + (6S)-5,6,7,8-tetrahydrofolate. The catalysed reaction is IMP + H2O = 5-formamido-1-(5-phospho-D-ribosyl)imidazole-4-carboxamide. It functions in the pathway purine metabolism; IMP biosynthesis via de novo pathway; 5-formamido-1-(5-phospho-D-ribosyl)imidazole-4-carboxamide from 5-amino-1-(5-phospho-D-ribosyl)imidazole-4-carboxamide (10-formyl THF route): step 1/1. It participates in purine metabolism; IMP biosynthesis via de novo pathway; IMP from 5-formamido-1-(5-phospho-D-ribosyl)imidazole-4-carboxamide: step 1/1. The polypeptide is Bifunctional purine biosynthesis protein PurH (Prochlorococcus marinus (strain MIT 9215)).